Reading from the N-terminus, the 335-residue chain is Acetyl-coenzyme A carboxylase carboxyl transferase subunit alpha (335 aa).

The region spanning 38 to 292 is the CoA carboxyltransferase C-terminal domain; it reads TLEQKAEELR…ATALSEEIEN (255 aa).

Belongs to the AccA family. Acetyl-CoA carboxylase is a heterohexamer composed of biotin carboxyl carrier protein (AccB), biotin carboxylase (AccC) and two subunits each of ACCase subunit alpha (AccA) and ACCase subunit beta (AccD).

It localises to the cytoplasm. The enzyme catalyses N(6)-carboxybiotinyl-L-lysyl-[protein] + acetyl-CoA = N(6)-biotinyl-L-lysyl-[protein] + malonyl-CoA. It functions in the pathway lipid metabolism; malonyl-CoA biosynthesis; malonyl-CoA from acetyl-CoA: step 1/1. In terms of biological role, component of the acetyl coenzyme A carboxylase (ACC) complex. First, biotin carboxylase catalyzes the carboxylation of biotin on its carrier protein (BCCP) and then the CO(2) group is transferred by the carboxyltransferase to acetyl-CoA to form malonyl-CoA. This chain is Acetyl-coenzyme A carboxylase carboxyl transferase subunit alpha, found in Heliobacterium modesticaldum (strain ATCC 51547 / Ice1).